The chain runs to 33 residues: ECLGWMKGCEPKNNKCCSSYVCTYKYPWCRYDL.

3 disulfide bridges follow: cysteine 2/cysteine 17, cysteine 9/cysteine 22, and cysteine 16/cysteine 29.

It belongs to the neurotoxin 10 (Hwtx-1) family. 22 (Htx-4) subfamily. In terms of tissue distribution, expressed by the venom gland.

The protein localises to the secreted. Voltage-gated sodium channel Nav1.7/SCN9A inhibitor. The chain is Mu-theraphotoxin-Osp1b from Orphnaecus sp. (strain Maanghit-Cave/Philippines) (Tarantula spider).